Here is a 200-residue protein sequence, read N- to C-terminus: Cysteine dioxygenase type 1 (200 aa).

Fe cation contacts are provided by H86, H88, and H140. The segment at residues 93–157 (CFLKMLQGNL…TEPAVSLHLY (65 aa)) is a cross-link (3'-(S-cysteinyl)-tyrosine (Cys-Tyr)).

It belongs to the cysteine dioxygenase family. In terms of assembly, monomer. Requires Fe(2+) as cofactor. Ni(2+) serves as cofactor. The cofactor is Zn(2+). Post-translationally, the thioether cross-link between Cys-93 and Tyr-157 plays a structural role through stabilizing the Fe(2+) ion, and prevents the production of highly damaging free hydroxyl radicals by holding the oxygen radical via hydroxyl hydrogen. In terms of tissue distribution, highly expressed in liver and placenta. Low expression in heart, brain and pancreas. Also detected in hepatoblastoma Hep-G2 cells.

It catalyses the reaction L-cysteine + O2 = 3-sulfino-L-alanine + H(+). The protein operates within organosulfur biosynthesis; taurine biosynthesis; hypotaurine from L-cysteine: step 1/2. Its function is as follows. Catalyzes the oxidation of cysteine to cysteine sulfinic acid with addition of molecular dioxygen. This is Cysteine dioxygenase type 1 (CDO1) from Homo sapiens (Human).